Consider the following 1049-residue polypeptide: MRSFYNKCFTNKLISAHSLFCQHVSTLKNNKKECFEDVKRSNRISDEFYSSFLYHSYIENLKSTKEYVYFIYLQDIYYNINIFKNKGRLYISNNGLCNDKLKDNNNNNNINSNNFGNSYNAYTKKKSFYHSFNDLNEAKEIRKKRKNEKSEKNIVEYLLCNIINPNENYHIQNIYNHNLNNNVSIEIHKKNDSVMYHYNNEKKTKTSKMTTDIKLKQINNVYIKYVPYKNKIITLACPNKYYPTLYRYFSSHTNKKEDAEENDKNKNININNVDNRYKEDFMYGCENKNDSEKHKKTTNNNFGDEFEKLKVKELDKILNKLEMLYDNKNNKMNINVKILGYIFKNFLLKNKELKRKIFCSLFFLLCSKMAIIYTPILLSTFIENVNLQKSLSNNIDIYSTNKSSVLLLCAYVFSRVLSSTMNELRNSVFSNISQKISTFVSKLFFYKIHNLNLTYILSKKNGELSFIFNRGCKSITNLLNVMVFQIIPIIIEFILYLYILTYKIHYTVSLVTCFNMFLYVLFTTLITKRRTIIRKHMNKAEQNTFNIFLDSIQNVEQVKYYTNEIHELKKFIKEQKKYEKEAINVQKSLSFLNFGQQIILNTNLFLCMYLTYLNIANDIFPFSYLILVNTLLFQLAMPLNMFGTIYRETKLSLVDIESMIKILVKKIKSPDYGNQMLIKNGNIKFENVYFKYPLNEDINGLEQNYQAKEKDPNIINNINNINNINNINNINNINSINNIYTFESNVKNISSTNMITSSINKLKKWYLDKVKDNKKNVQYNNNDVKKTNPNITKNLNKEIKENINTHLKNHKIINNSPNYNNNNYLFQNFTCNIENGEKVAIIGKSGSGKSSLIKLLLKFYEVNSGNIYIDNKNIDDIDLYTLRKNISVVPQDTILFNNTISYNIKYGNFQCTDKQMIQASIKAELHDKIMKMENKYDTIVGERGTKLSIGEKQRICIARCFLKDSKIIVLDEHASNLDNENKKAIEKALTKLCMGKTTFIITHVMENLKHMDKIIFFCGKNIYVGSHKNLMDDNHFYREYYDSKNNKML.

The N-terminal 90 residues, 1–90 (MRSFYNKCFT…NIFKNKGRLY (90 aa)), are a transit peptide targeting the mitochondrion. 6 helical membrane-spanning segments follow: residues 357–377 (IFCS…TPIL), 397–419 (IYST…VLSS), 481–501 (VMVF…YILT), 506–526 (YTVS…TTLI), 591–611 (FLNF…MYLT), and 619–639 (IFPF…AMPL). In terms of domain architecture, ABC transmembrane type-1 spans 360–651 (SLFFLLCSKM…FGTIYRETKL (292 aa)). Positions 807-1043 (LKNHKIINNS…NHFYREYYDS (237 aa)) constitute an ABC transporter domain. 843–850 (GKSGSGKS) contributes to the ATP binding site.

This sequence belongs to the ABC transporter superfamily. ABCB family. Heavy Metal importer (TC 3.A.1.210) subfamily. In terms of assembly, homodimer. Interacts with ISCU. Interacts with IscA2. Interacts with NBP35. Interacts with mHCF101.

It is found in the mitochondrion membrane. Its activity is regulated as follows. ATPase activity is stimulated by reduced glutathione. In terms of biological role, transports glutathione-coordinated [4Fe-4S] iron-sulfur clusters in an ATP-dependent manner. Required for optimal parasite growth during erythrocytic stages. This is ABC transporter ATM1 from Plasmodium falciparum (isolate 3D7).